A 211-amino-acid chain; its full sequence is Thymidylate kinase (211 aa).

7-14 (GIDGCGKT) lines the ATP pocket.

It belongs to the thymidylate kinase family.

The enzyme catalyses dTMP + ATP = dTDP + ADP. In terms of biological role, phosphorylation of dTMP to form dTDP in both de novo and salvage pathways of dTTP synthesis. In Anaplasma marginale (strain St. Maries), this protein is Thymidylate kinase.